A 203-amino-acid chain; its full sequence is E3 ubiquitin-protein ligase RNF152 (203 aa).

The segment at 12-55 adopts an RING-type zinc-finger fold; sequence CQICFNYYSPRRRPKLLDCKHTCCSVCLQQMRTSQKDVRCPWCR. The segment at 106 to 165 is necessary for interaction with RRAGA; that stretch reads ISKERTLLPGDMGCRLLPGSQQKSLTVVTIPAEQQPLQGGAPPEAVEEEPDRRGVVKSST. Residues 139–158 are disordered; that stretch reads QQPLQGGAPPEAVEEEPDRR. Residues 167 to 187 form a helical membrane-spanning segment; the sequence is SGVCTVILVACVLVFLLGIVL.

The protein belongs to the RNF152 family. Interacts with RRAGA (inactive GDP-bound form); stimulated by amino acid starvation. Interacts with SEC16A. Post-translationally, ubiquitinated. Autoubiquitinated in vitro, leading to its degradation by the proteasome.

The protein resides in the lysosome membrane. The catalysed reaction is S-ubiquitinyl-[E2 ubiquitin-conjugating enzyme]-L-cysteine + [acceptor protein]-L-lysine = [E2 ubiquitin-conjugating enzyme]-L-cysteine + N(6)-ubiquitinyl-[acceptor protein]-L-lysine.. It functions in the pathway protein modification; protein ubiquitination. In terms of biological role, E3 ubiquitin-protein ligase that acts as a negative regulator of mTORC1 signaling by mediating ubiquitination of RagA/RRAGA and RHEB. Catalyzes 'Lys-63'-linked polyubiquitination of RagA/RRAGA in response to amino acid starvation, thereby regulating mTORC1 signaling. Also mediates monoubiquitination of RHEB, promoting its association with the TSC-TBC complex and subsequent inhibition. Also mediates 'Lys-48'-linked polyubiquitination of target proteins and their subsequent targeting to the proteasome for degradation. Induces apoptosis when overexpressed. The chain is E3 ubiquitin-protein ligase RNF152 from Mus musculus (Mouse).